Consider the following 146-residue polypeptide: Hemoglobin subunit beta (146 aa).

A Globin domain is found at 2–146 (HWSAEEKQLI…VAHALARKYH (145 aa)). Positions 63 and 92 each coordinate heme b.

The protein belongs to the globin family. In terms of assembly, heterotetramer of two alpha chains and two beta chains. As to expression, red blood cells.

In terms of biological role, involved in oxygen transport from the lung to the various peripheral tissues. The protein is Hemoglobin subunit beta (HBB) of Columba livia (Rock dove).